Consider the following 107-residue polypeptide: Wound-induced proteinase inhibitor 1 (107 aa).

The first 23 residues, 1–23, serve as a signal peptide directing secretion; sequence MESKFAHIIVFFLLATSFETLLA. Residues 24–36 constitute a propeptide that is removed on maturation; that stretch reads RKESDGPEVIELQ.

The protein belongs to the protease inhibitor I13 (potato type I serine protease inhibitor) family. In terms of assembly, heterogeneous tetramers of similar chains.

Functionally, inhibits both chymotrypsin and trypsin. The chain is Wound-induced proteinase inhibitor 1 from Solanum tuberosum (Potato).